The sequence spans 733 residues: Non-secreted LysM effector LCP1 (733 aa).

The signal sequence occupies residues 1–22 (MMRRPWLLSALVAWVKLPSVQG). 2 consecutive LysM domains span residues 211-256 (SEYT…KLCI) and 261-309 (DVYV…TICI). 9 N-linked (GlcNAc...) asparagine glycosylation sites follow: Asn-298, Asn-304, Asn-340, Asn-350, Asn-381, Asn-432, Asn-442, Asn-455, and Asn-538. In terms of domain architecture, LysM 3 spans 347-393 (LFHNVTAGDDCGTIGLKYSISLDDFIFLNSMIWPNCTNLWLRASYCV). Positions 605 to 629 (SPITSSAPTSTTASSKTSSSAAQPT) are enriched in low complexity. The segment at 605–637 (SPITSSAPTSTTASSKTSSSAAQPTNVSTDGTC) is disordered. N-linked (GlcNAc...) asparagine glycosylation is present at Asn-630. Chitin-binding type-1 domains lie at 634–680 (DGTC…KCDA) and 688–733 (DGTC…GVCT). 8 cysteine pairs are disulfide-bonded: Cys-637/Cys-654, Cys-645/Cys-660, Cys-653/Cys-667, Cys-671/Cys-678, Cys-691/Cys-708, Cys-699/Cys-714, Cys-707/Cys-721, and Cys-725/Cys-732.

This sequence belongs to the secreted LysM effector family.

It localises to the secreted. Its subcellular location is the cell membrane. The protein localises to the vacuole. In terms of biological role, secreted effector that enables the plant pathogenic fungus to manipulate host defenses for successful infection. Not involved in host recognition and penetration but suppresses host cell death and promotes fumonisin biosynthesis while the pathogen colonizes maize kernels. This is Non-secreted LysM effector LCP1 from Gibberella moniliformis (strain M3125 / FGSC 7600) (Maize ear and stalk rot fungus).